The sequence spans 312 residues: Ribosomal RNA small subunit methyltransferase H (312 aa).

S-adenosyl-L-methionine contacts are provided by residues 33–35 (GGY), D51, F78, D97, and Q104.

It belongs to the methyltransferase superfamily. RsmH family.

The protein localises to the cytoplasm. It carries out the reaction cytidine(1402) in 16S rRNA + S-adenosyl-L-methionine = N(4)-methylcytidine(1402) in 16S rRNA + S-adenosyl-L-homocysteine + H(+). In terms of biological role, specifically methylates the N4 position of cytidine in position 1402 (C1402) of 16S rRNA. The sequence is that of Ribosomal RNA small subunit methyltransferase H from Orientia tsutsugamushi (strain Ikeda) (Rickettsia tsutsugamushi).